The sequence spans 76 residues: MSSDGSAGKAVVEAKGLNPGLIVLLVIGGLLVTFLIANYVMYMYAQKNLPPRKKKPLSKKKLKREKLKQGVPVPGE.

Residues 50-55 (PPRKKK) carry the Nuclear localization signal motif. Residues 51-66 (PRKKKPLSKKKLKREK) show a composition bias toward basic residues. The tract at residues 51–76 (PRKKKPLSKKKLKREKLKQGVPVPGE) is disordered.

This sequence belongs to the S1FA transcription factor family.

It is found in the nucleus. In terms of biological role, DNA-binding protein that specifically recognizes a negative element (S1F) within the RPS1 promoter. The sequence is that of DNA-binding protein S1FA2 (S1FA2) from Arabidopsis thaliana (Mouse-ear cress).